The following is a 1182-amino-acid chain: WD repeat-containing protein on Y chromosome (1182 aa).

8 WD repeats span residues Glu-155–Ala-199, Arg-323–Ala-362, Gly-366–Thr-405, Thr-456–Ile-495, Thr-508–Asn-547, Phe-595–Asn-635, Lys-740–Ala-779, and Gly-823–Leu-862. Residues Thr-1031–His-1182 form a disordered region. Composition is skewed to low complexity over residues Gly-1079–Gly-1092 and Thr-1103–Ser-1121.

In Drosophila virilis (Fruit fly), this protein is WD repeat-containing protein on Y chromosome.